The primary structure comprises 465 residues: UDP-N-acetylmuramate--L-alanine ligase (465 aa).

112–118 lines the ATP pocket; sequence GTHGKTT.

It belongs to the MurCDEF family.

It localises to the cytoplasm. It carries out the reaction UDP-N-acetyl-alpha-D-muramate + L-alanine + ATP = UDP-N-acetyl-alpha-D-muramoyl-L-alanine + ADP + phosphate + H(+). It functions in the pathway cell wall biogenesis; peptidoglycan biosynthesis. In terms of biological role, cell wall formation. The polypeptide is UDP-N-acetylmuramate--L-alanine ligase (Burkholderia lata (strain ATCC 17760 / DSM 23089 / LMG 22485 / NCIMB 9086 / R18194 / 383)).